Consider the following 237-residue polypeptide: Concanavalin-Br (237 aa).

2 residues coordinate Mn(2+): E8 and D10. Ca(2+)-binding residues include D10, Y12, N14, and D19. Y12 serves as a coordination point for a carbohydrate. The Mn(2+) site is built by D19, H24, and S34. 99 to 100 (LY) is a binding site for a carbohydrate. D208 serves as a coordination point for Ca(2+). Residue R228 participates in a carbohydrate binding.

The protein belongs to the leguminous lectin family. In terms of assembly, homotetramer.

Functionally, glucose/D-mannose specific lectin. Has anti-inflammatory activity in rats. Induces histamine release in mast cells from hamster and rat. Induces lymphocyte proliferation and IFNG production. Shows toxicity against the aquatic snail B.glabrata at concentrations higher than 20 ug/ml. This is Concanavalin-Br from Canavalia brasiliensis (Brazilian jack bean).